Reading from the N-terminus, the 230-residue chain is Cytidylate kinase (230 aa).

12 to 20 (GPSGAGKGT) contributes to the ATP binding site.

It belongs to the cytidylate kinase family. Type 1 subfamily.

It is found in the cytoplasm. It catalyses the reaction CMP + ATP = CDP + ADP. The catalysed reaction is dCMP + ATP = dCDP + ADP. This chain is Cytidylate kinase, found in Shewanella sediminis (strain HAW-EB3).